The primary structure comprises 490 residues: GTPase Der (490 aa).

EngA-type G domains follow at residues P3–V166 and I203–T376. GTP contacts are provided by residues G9–S16, D56–I60, N118–D121, G209–S216, D256–V260, and N321–D324. The 85-residue stretch at R377–E461 folds into the KH-like domain.

It belongs to the TRAFAC class TrmE-Era-EngA-EngB-Septin-like GTPase superfamily. EngA (Der) GTPase family. As to quaternary structure, associates with the 50S ribosomal subunit.

In terms of biological role, GTPase that plays an essential role in the late steps of ribosome biogenesis. The protein is GTPase Der of Citrobacter koseri (strain ATCC BAA-895 / CDC 4225-83 / SGSC4696).